The following is a 433-amino-acid chain: ATP-sensitive inward rectifier potassium channel 12 (433 aa).

Residues 1-77 (MTAASRANPY…LADMFTTCVD (77 aa)) are Cytoplasmic-facing. Cys-75 is subject to S-nitrosocysteine. The chain crosses the membrane as a helical span at residues 78 to 104 (IRWRYMLLIFSLAFLASWLLFGIIFWV). A 1,2-diacyl-sn-glycero-3-phospho-(1D-myo-inositol-4,5-bisphosphate) is bound by residues Arg-79 and Arg-81. Topologically, residues 105–129 (IAVAHGDLEPAEGRGRTPCVMQVHG) are extracellular. A disulfide bond links Cys-123 and Cys-155. Residues 130–146 (FMAAFLFSIETQTTIGY) constitute an intramembrane region (helical; Pore-forming). Residues Thr-143, Ile-144, Gly-145, and Tyr-146 each coordinate K(+). The Selectivity filter signature appears at 143-148 (TIGYGL). Topologically, residues 147 to 155 (GLRCVTEEC) are extracellular. Residues 156–183 (PVAVFMVVAQSIVGCIIDSFMIGAIMAK) traverse the membrane as a helical segment. Residues Lys-183 and Lys-188 each contribute to the a 1,2-diacyl-sn-glycero-3-phospho-(1D-myo-inositol-4,5-bisphosphate) site. At 184–433 (MARPKKRAQT…QRPYRRESEI (250 aa)) the chain is on the cytoplasmic side. A disordered region spans residues 387 to 433 (DEEDEADGDQDGRSRDGLSPQARHDFDRLQAGGGVLEQRPYRRESEI). Residues 396-414 (QDGRSRDGLSPQARHDFDR) show a composition bias toward basic and acidic residues. Positions 431–433 (SEI) match the PDZ-binding motif.

It belongs to the inward rectifier-type potassium channel (TC 1.A.2.1) family. KCNJ12 subfamily. As to quaternary structure, homotetramer. Forms heteromer with KCNJ4. Can form heteromeric channels with Kir2.6/KCNJ18. Association, via its PDZ-recognition domain, with LIN7A, LIN7B, LIN7C, DLG1, CASK and APBA1 plays a key role in its localization and trafficking.

It localises to the membrane. Its subcellular location is the cell membrane. The protein localises to the sarcolemma. It is found in the T-tubule. It catalyses the reaction K(+)(in) = K(+)(out). With respect to regulation, activated by phosphatidylinositol 4,5-biphosphate (PtdIns(4,5)P2). PtdIns(4,5)P2 binding to the cytoplasmic side of the channel triggers a conformation change leading to channel opening. Inhibited by Ba(2+). Functionally, inward rectifying potassium channel that probably participates in controlling the resting membrane potential in electrically excitable cells. Probably participates in establishing action potential waveform and excitability of neuronal and muscle tissues. Inward rectifier potassium channels are characterized by a greater tendency to allow potassium to flow into the cell rather than out of it. Their voltage dependence is regulated by the concentration of extracellular potassium; as external potassium is raised, the voltage range of the channel opening shifts to more positive voltages. The inward rectification is mainly due to the blockage of outward current by internal magnesium. This chain is ATP-sensitive inward rectifier potassium channel 12 (KCNJ12), found in Homo sapiens (Human).